Reading from the N-terminus, the 380-residue chain is Cytochrome b (380 aa).

4 helical membrane-spanning segments follow: residues 33–53 (FGSLLGLCLVTQILTGLFLAM), 77–98 (WLIRNIHANGASFFFICLYLHV), 113–133 (WNIGVILLLLTMMTAFVGYVL), and 178–198 (FFAFHFLLPFVIAGASMIHLL). Heme b-binding residues include H83 and H97. Residues H182 and H196 each contribute to the heme b site. H201 serves as a coordination point for a ubiquinone. 4 helical membrane-spanning segments follow: residues 226–246 (YKDLFGFILMLVGLTSVALFS), 288–308 (LGGVLALLFSILVLMLVPMLH), 320–340 (PSQILFWALVADMLVLTWIGG), and 347–367 (FVLIGQVASTIYFALFLIALP).

The protein belongs to the cytochrome b family. In terms of assembly, the cytochrome bc1 complex contains 3 respiratory subunits (MT-CYB, CYC1 and UQCRFS1), 2 core proteins (UQCRC1 and UQCRC2) and probably 6 low-molecular weight proteins. Requires heme b as cofactor.

The protein resides in the mitochondrion inner membrane. Its function is as follows. Component of the ubiquinol-cytochrome c reductase complex (complex III or cytochrome b-c1 complex) that is part of the mitochondrial respiratory chain. The b-c1 complex mediates electron transfer from ubiquinol to cytochrome c. Contributes to the generation of a proton gradient across the mitochondrial membrane that is then used for ATP synthesis. The chain is Cytochrome b (mt-cyb) from Acipenser sinensis (Chinese sturgeon).